The sequence spans 225 residues: Pre-mRNA-splicing factor SPF27 (225 aa).

Alanine 2 is subject to N-acetylalanine. Serine 94 carries the post-translational modification Phosphoserine. Residues 138 to 222 (YNENLVHMIE…HGEANKENIR (85 aa)) are a coiled coil.

The protein belongs to the SPF27 family. In terms of assembly, component of the pre-catalytic and catalytic spliceosome complexes. Component of the postcatalytic spliceosome P complex. Component of the PRP19-CDC5L splicing complex composed of a core complex comprising a homotetramer of PRPF19, CDC5L, PLRG1 and BCAS2, and at least three less stably associated proteins CTNNBL1, CWC15 and HSPA8. Interacts directly in the complex with PRPF19, CDC5L and PLRG1. Ubiquitously expressed.

Its subcellular location is the nucleus. It is found in the nucleolus. Its function is as follows. Required for pre-mRNA splicing as component of the activated spliceosome. Component of the PRP19-CDC5L complex that forms an integral part of the spliceosome and is required for activating pre-mRNA splicing. May have a scaffolding role in the spliceosome assembly as it contacts all other components of the core complex. The PRP19-CDC5L complex may also play a role in the response to DNA damage (DDR). In Homo sapiens (Human), this protein is Pre-mRNA-splicing factor SPF27 (BCAS2).